The chain runs to 251 residues: MAVHLLIVDALNLIRRIHAVQGSPCVETCQHALDQLIMHSQPTHAVAVFDDENRSSGWRHQRLPDYKAGRPPMPEELHDEMPALRAAFEQRGVPCWSTSGNEADDLAATLAVKVTQAGHQATIVSTDKGYCQLLSPTLRIRDYFQKRWLDAPFIDKEFGVQPQQLPDYWGLAGISSSKVPGVAGIGPKSATQLLVEFQSLEGIYENLDAVAEKWRKKLETHKEMAFLCRDIARLQTDLHIDGNLQQLRLVR.

Position 104 (Asp104) interacts with Mg(2+). A 5'-3' exonuclease domain is found at 160-249 (VQPQQLPDYW…IDGNLQQLRL (90 aa)). Positions 171, 172, 180, 182, and 185 each coordinate K(+). The interval 184–189 (GIGPKS) is interaction with DNA.

The protein belongs to the Xni family. Mg(2+) serves as cofactor. K(+) is required as a cofactor.

Its function is as follows. Has flap endonuclease activity. During DNA replication, flap endonucleases cleave the 5'-overhanging flap structure that is generated by displacement synthesis when DNA polymerase encounters the 5'-end of a downstream Okazaki fragment. This Escherichia coli O139:H28 (strain E24377A / ETEC) protein is Flap endonuclease Xni.